Reading from the N-terminus, the 267-residue chain is Small ribosomal subunit protein uS2 (267 aa).

The interval 224–267 (GRQGEDQVDEKTFEGQKSEAAEGDKKTADNSMEDIVNAVEGDNK) is disordered. Residues 225 to 251 (RQGEDQVDEKTFEGQKSEAAEGDKKTA) show a composition bias toward basic and acidic residues.

It belongs to the universal ribosomal protein uS2 family.

This chain is Small ribosomal subunit protein uS2, found in Levilactobacillus brevis (strain ATCC 367 / BCRC 12310 / CIP 105137 / JCM 1170 / LMG 11437 / NCIMB 947 / NCTC 947) (Lactobacillus brevis).